A 100-amino-acid chain; its full sequence is MGALTKAEMAERLYEELGLNKREAKELVELFFEEIRHALEENEQVKLSGFGNFDLRDKRQRPGRNPKTGEEIPITARRVVTFRPGQKLKARVEAYAGTKP.

Positions F53–I72 are disordered.

This sequence belongs to the bacterial histone-like protein family. In terms of assembly, heterodimer of an alpha and a beta chain.

In terms of biological role, this protein is one of the two subunits of integration host factor, a specific DNA-binding protein that functions in genetic recombination as well as in transcriptional and translational control. In Pseudomonas putida (strain ATCC 700007 / DSM 6899 / JCM 31910 / BCRC 17059 / LMG 24140 / F1), this protein is Integration host factor subunit alpha.